The chain runs to 237 residues: Orotidine 5'-phosphate decarboxylase (237 aa).

Substrate is bound by residues D17, K39, D66–T75, T121, R182, Q191, G211, and R212. K68 acts as the Proton donor in catalysis.

The protein belongs to the OMP decarboxylase family. Type 1 subfamily. Homodimer.

It carries out the reaction orotidine 5'-phosphate + H(+) = UMP + CO2. The protein operates within pyrimidine metabolism; UMP biosynthesis via de novo pathway; UMP from orotate: step 2/2. In terms of biological role, catalyzes the decarboxylation of orotidine 5'-monophosphate (OMP) to uridine 5'-monophosphate (UMP). This chain is Orotidine 5'-phosphate decarboxylase, found in Rhodopseudomonas palustris (strain TIE-1).